Here is a 640-residue protein sequence, read N- to C-terminus: 1-deoxy-D-xylulose-5-phosphate synthase (640 aa).

Residues H75 and 117–119 (GHA) contribute to the thiamine diphosphate site. Residue D146 participates in Mg(2+) binding. Thiamine diphosphate contacts are provided by residues 147–148 (AA), N175, and E370. Mg(2+) is bound at residue N175.

Belongs to the transketolase family. DXPS subfamily. In terms of assembly, homodimer. Mg(2+) serves as cofactor. Thiamine diphosphate is required as a cofactor.

It catalyses the reaction D-glyceraldehyde 3-phosphate + pyruvate + H(+) = 1-deoxy-D-xylulose 5-phosphate + CO2. The protein operates within metabolic intermediate biosynthesis; 1-deoxy-D-xylulose 5-phosphate biosynthesis; 1-deoxy-D-xylulose 5-phosphate from D-glyceraldehyde 3-phosphate and pyruvate: step 1/1. Functionally, catalyzes the acyloin condensation reaction between C atoms 2 and 3 of pyruvate and glyceraldehyde 3-phosphate to yield 1-deoxy-D-xylulose-5-phosphate (DXP). This is 1-deoxy-D-xylulose-5-phosphate synthase from Chlamydia trachomatis serovar A (strain ATCC VR-571B / DSM 19440 / HAR-13).